The sequence spans 361 residues: Cyclin-D3-3 (361 aa).

It belongs to the cyclin family. Cyclin D subfamily.

Functionally, promotes divisions in the guard cells (GCs) after the guard mother cells (GMC) symmetric division. The polypeptide is Cyclin-D3-3 (CYCD3-3) (Arabidopsis thaliana (Mouse-ear cress)).